The chain runs to 245 residues: 1-(5-phosphoribosyl)-5-[(5-phosphoribosylamino)methylideneamino] imidazole-4-carboxamide isomerase (245 aa).

Asp-8 acts as the Proton acceptor in catalysis. The active-site Proton donor is Asp-129.

This sequence belongs to the HisA/HisF family.

The protein resides in the cytoplasm. It catalyses the reaction 1-(5-phospho-beta-D-ribosyl)-5-[(5-phospho-beta-D-ribosylamino)methylideneamino]imidazole-4-carboxamide = 5-[(5-phospho-1-deoxy-D-ribulos-1-ylimino)methylamino]-1-(5-phospho-beta-D-ribosyl)imidazole-4-carboxamide. It functions in the pathway amino-acid biosynthesis; L-histidine biosynthesis; L-histidine from 5-phospho-alpha-D-ribose 1-diphosphate: step 4/9. In Pelobacter propionicus (strain DSM 2379 / NBRC 103807 / OttBd1), this protein is 1-(5-phosphoribosyl)-5-[(5-phosphoribosylamino)methylideneamino] imidazole-4-carboxamide isomerase.